The primary structure comprises 185 residues: Ribosome-recycling factor (185 aa).

Belongs to the RRF family.

It localises to the cytoplasm. Functionally, responsible for the release of ribosomes from messenger RNA at the termination of protein biosynthesis. May increase the efficiency of translation by recycling ribosomes from one round of translation to another. This chain is Ribosome-recycling factor, found in Mycobacteroides abscessus (strain ATCC 19977 / DSM 44196 / CCUG 20993 / CIP 104536 / JCM 13569 / NCTC 13031 / TMC 1543 / L948) (Mycobacterium abscessus).